The primary structure comprises 402 residues: Phosphoglycerate kinase (402 aa).

Residues 24-26 (DFN), R40, 63-66 (HFGR), R122, and R155 each bind substrate. ATP contacts are provided by residues K206, G297, E328, and 357–360 (GGDS).

This sequence belongs to the phosphoglycerate kinase family. As to quaternary structure, monomer.

Its subcellular location is the cytoplasm. The enzyme catalyses (2R)-3-phosphoglycerate + ATP = (2R)-3-phospho-glyceroyl phosphate + ADP. It functions in the pathway carbohydrate degradation; glycolysis; pyruvate from D-glyceraldehyde 3-phosphate: step 2/5. The polypeptide is Phosphoglycerate kinase (Synechococcus sp. (strain CC9311)).